We begin with the raw amino-acid sequence, 85 residues long: Large ribosomal subunit protein bL27 (85 aa).

Belongs to the bacterial ribosomal protein bL27 family.

The polypeptide is Large ribosomal subunit protein bL27 (Pseudomonas aeruginosa (strain LESB58)).